A 433-amino-acid polypeptide reads, in one-letter code: MRMIDIIEKKRDGHTLTTEEINFFIDGYVKGDIPDYQASSLAMAIYFQDMNDDERAALTMAMVNSGDMIDLSDIKGVKVDKHSTGGVGDTTTLVLAPLVAAVDVPVAKMSGRGLGHTGGTIDKLEAIDGFHVEIDEATFVKLVNENKVAVVGQSGNLTPADKKLYALRDVTGTVNSIPLIASSIMSKKIAAGADAIVLDVKTGSGAFMKTLEDAEALAHAMVRIGNNVGRNTMAIISDMNQPLGRAIGNALELQEAIDTLKGQGPKDLTELVLTLGSQMVVLANKAETLEEARALLIEAINSGAALEKFKTFIKNQGGDETVIDHPERLPQAQYQIEYKAKKSGYVTELVSNDIGVASMMLGAGRLTKEDDIDLAVGIVLNKKIGDKVEEGESLLTIHSNRQDVDDVVKKLDSSITIADHVVSPTLIHKIITE.

81–83 (KHS) contacts phosphate. Glycine 88 and threonine 90 together coordinate K(+). Residues threonine 92, 108–110 (KMS), and threonine 120 contribute to the phosphate site. 2 residues coordinate substrate: arginine 168 and lysine 187. Residues leucine 243, alanine 246, and glutamate 255 each contribute to the K(+) site.

Belongs to the thymidine/pyrimidine-nucleoside phosphorylase family. As to quaternary structure, homodimer. Requires K(+) as cofactor.

The enzyme catalyses uridine + phosphate = alpha-D-ribose 1-phosphate + uracil. The catalysed reaction is thymidine + phosphate = 2-deoxy-alpha-D-ribose 1-phosphate + thymine. It carries out the reaction 2'-deoxyuridine + phosphate = 2-deoxy-alpha-D-ribose 1-phosphate + uracil. Its function is as follows. Catalyzes phosphorolysis of the pyrimidine nucleosides uridine, thymidine and 2'-deoxyuridine with the formation of the corresponding pyrimidine base and ribose-1-phosphate. The protein is Pyrimidine-nucleoside phosphorylase (pdp) of Staphylococcus aureus (strain Mu50 / ATCC 700699).